The chain runs to 325 residues: Probable arylamine N-acetyltransferase 1 (325 aa).

Catalysis depends on Cys-72, which acts as the Acyl-thioester intermediate. Residues His-112 and Asp-127 contribute to the active site.

Belongs to the arylamine N-acetyltransferase family.

The catalysed reaction is an arylamine + acetyl-CoA = an N-acetylarylamine + CoA. The sequence is that of Probable arylamine N-acetyltransferase 1 from Dictyostelium discoideum (Social amoeba).